The following is a 314-amino-acid chain: L-lactate dehydrogenase 1 (314 aa).

NAD(+)-binding positions include V16, D37, K42, Y68, and G82 to L83. Substrate-binding positions include Q85, R91, and N123–D126. Residues A121 to N123 and S146 each bind NAD(+). Residue D151 to R154 participates in substrate binding. Beta-D-fructose 1,6-bisphosphate contacts are provided by R156 and H171. Catalysis depends on H178, which acts as the Proton acceptor. Y223 carries the phosphotyrosine modification. A substrate-binding site is contributed by T232.

This sequence belongs to the LDH/MDH superfamily. LDH family. In terms of assembly, homotetramer.

It localises to the cytoplasm. The catalysed reaction is (S)-lactate + NAD(+) = pyruvate + NADH + H(+). The protein operates within fermentation; pyruvate fermentation to lactate; (S)-lactate from pyruvate: step 1/1. Its activity is regulated as follows. Allosterically activated by fructose 1,6-bisphosphate (FBP). In terms of biological role, catalyzes the conversion of lactate to pyruvate. The polypeptide is L-lactate dehydrogenase 1 (Bacillus cereus (strain ATCC 14579 / DSM 31 / CCUG 7414 / JCM 2152 / NBRC 15305 / NCIMB 9373 / NCTC 2599 / NRRL B-3711)).